A 389-amino-acid polypeptide reads, in one-letter code: Large envelope protein (389 aa).

The residue at position 1 (methionine 1) is an N-acetylmethionine. A lipid anchor (N-myristoyl glycine; by host) is attached at glycine 2. Positions 2 to 108 (GQNLSTSNPL…PPLRDTHPQA (107 aa)) are pre-S1. Residues 2-163 (GQNLSTSNPL…FSTTGDPAPN (162 aa)) are pre-S. The Virion surface; in external conformation segment spans residues 2 to 170 (GQNLSTSNPL…APNMENITSG (169 aa)). At 2-242 (GQNLSTSNPL…PGYRWMCLRR (241 aa)) the chain is on the intravirion; in internal conformation side. The disordered stretch occupies residues 75 to 107 (TTLPANPPPASTNRQSGRQPTPLSPPLRDTHPQ). Polar residues predominate over residues 85–95 (STNRQSGRQPT). The tract at residues 109–163 (MQWNSTTFHQALQDPRVRGLYFPAGGSSSGTLNPVPNTASHISSVFSTTGDPAPN) is pre-S2. A helical membrane pass occupies residues 171 to 191 (FLGPLLVLQAGFFLLTKILTI). The Intravirion; in external conformation portion of the chain corresponds to 192–242 (PQSLDSWWTSLNFLGGAPVCLGQNSQSPTSNHSPTSCPPICPGYRWMCLRR). Residues 243 to 263 (FIIFLFILLLCLIFLLVLLDY) traverse the membrane as a helical segment. Residues 264–337 (QGMLPVCPLI…WASVRFSWLS (74 aa)) lie on the Virion surface side of the membrane. N-linked (GlcNAc...) asparagine; by host glycosylation occurs at asparagine 309. The chain crosses the membrane as a helical span at residues 338–358 (LLAPFVQWFAGLSPTVWLLAI). The Intravirion segment spans residues 359–364 (WMMWYW). Residues 365–387 (GPNLYNILSPFIPLLPIFFCLWV) traverse the membrane as a helical segment. Topologically, residues 388 to 389 (YI) are virion surface.

The protein belongs to the orthohepadnavirus major surface antigen family. In terms of assembly, in its internal form (Li-HBsAg), interacts with the capsid protein and with the isoform S. Interacts with host chaperone CANX. Associates with host chaperone CANX through its pre-S2 N glycan; this association may be essential for isoform M proper secretion. As to quaternary structure, interacts with isoform L. Interacts with the antigens of satellite virus HDV (HDVAgs); this interaction is required for encapsidation of HDV genomic RNA. Post-translationally, isoform M is N-terminally acetylated by host at a ratio of 90%, and N-glycosylated by host at the pre-S2 region. Myristoylated.

The protein resides in the virion membrane. Functionally, the large envelope protein exists in two topological conformations, one which is termed 'external' or Le-HBsAg and the other 'internal' or Li-HBsAg. In its external conformation the protein attaches the virus to cell receptors and thereby initiating infection. This interaction determines the species specificity and liver tropism. This attachment induces virion internalization predominantly through caveolin-mediated endocytosis. The large envelope protein also assures fusion between virion membrane and endosomal membrane. In its internal conformation the protein plays a role in virion morphogenesis and mediates the contact with the nucleocapsid like a matrix protein. Its function is as follows. The middle envelope protein plays an important role in the budding of the virion. It is involved in the induction of budding in a nucleocapsid independent way. In this process the majority of envelope proteins bud to form subviral lipoprotein particles of 22 nm of diameter that do not contain a nucleocapsid. This is Large envelope protein from Pan troglodytes (Chimpanzee).